The primary structure comprises 127 residues: Multifunctional methyltransferase subunit trm112 (127 aa).

Residues lysine 2 to proline 123 enclose the TRM112 domain.

It belongs to the TRM112 family. As to quaternary structure, heterodimer of mtq2-rmt-1/trm112, forming the eRF1 methyltransferase. Rmt-1/trm112 is necessary for the solubility and activity of the catalytic subunit mtq2. Interacts with trm11; required for full tRNA methyltransferase activity. Interacts with bud23; required for full rRNA methyltransferase activity.

The protein resides in the cytoplasm. It is found in the nucleus. Functionally, acts as an activator of both rRNA/tRNA and protein methyltransferases. Together with methyltransferase mtq2, required for the methylation of eRF1 on 'Gln-182'. Together with methyltransferase trm11, required for the formation of 2-methylguanosine at position 10 (m2G10) in tRNA. Together with methyltransferase bud23, required for the formation of a 7-methylguanine in 18S rRNA. Involved in biogenesis of both 40S and 60S ribosomal subunits. The chain is Multifunctional methyltransferase subunit trm112 (rmt-1) from Neurospora crassa (strain ATCC 24698 / 74-OR23-1A / CBS 708.71 / DSM 1257 / FGSC 987).